Reading from the N-terminus, the 166-residue chain is Large ribosomal subunit protein uL10 (166 aa).

It belongs to the universal ribosomal protein uL10 family. As to quaternary structure, part of the ribosomal stalk of the 50S ribosomal subunit. The N-terminus interacts with L11 and the large rRNA to form the base of the stalk. The C-terminus forms an elongated spine to which L12 dimers bind in a sequential fashion forming a multimeric L10(L12)X complex.

In terms of biological role, forms part of the ribosomal stalk, playing a central role in the interaction of the ribosome with GTP-bound translation factors. The chain is Large ribosomal subunit protein uL10 from Aeromonas hydrophila subsp. hydrophila (strain ATCC 7966 / DSM 30187 / BCRC 13018 / CCUG 14551 / JCM 1027 / KCTC 2358 / NCIMB 9240 / NCTC 8049).